The sequence spans 240 residues: MDMKKYAAEAIGTFWLTFAGCGSAVIAAGFPQVGIGLVGVSLAFGLSVVTMAYAIGHISGCHLNPAVTVGLAAGGRFPAGQILPYVIAQVCGAIVAAELLYIIASGAPGFDVTKGFASNGYDAHSPGQYSMMACFLTEVVMTMMFLFIIMGATHGRAPAGFAPLAIGLALVMIHLVSIPVTNTSVNPARSTGPALFVGGWAMAQLWLFWVAPLIGGALGGVIYRWLSEEPTGVVAGAKAA.

2 helical membrane passes run 10–30 (AIGTFWLTFAGCGSAVIAAGF) and 35–55 (IGLVGVSLAFGLSVVTMAYAI). Positions 64 to 66 (NPA) match the NPA 1 motif. 3 helical membrane-spanning segments follow: residues 82 to 102 (ILPYVIAQVCGAIVAAELLYI), 131 to 151 (MMACFLTEVVMTMMFLFIIMG), and 160 to 180 (GFAPLAIGLALVMIHLVSIPV). An NPA 2 motif is present at residues 186-188 (NPA). The chain crosses the membrane as a helical span at residues 194 to 214 (ALFVGGWAMAQLWLFWVAPLI).

It belongs to the MIP/aquaporin (TC 1.A.8) family. As to quaternary structure, homotetramer.

The protein resides in the cell inner membrane. The catalysed reaction is H2O(in) = H2O(out). In terms of biological role, channel that permits osmotically driven movement of water in both directions. It is involved in the osmoregulation and in the maintenance of cell turgor during volume expansion in rapidly growing cells. It mediates rapid entry or exit of water in response to abrupt changes in osmolarity. This is Aquaporin Z from Bradyrhizobium diazoefficiens (strain JCM 10833 / BCRC 13528 / IAM 13628 / NBRC 14792 / USDA 110).